A 136-amino-acid polypeptide reads, in one-letter code: Alpha-2-purothionin (136 aa).

A signal peptide spans 1 to 27; the sequence is MGSKGLKGVMVCLLILGLVLEQVQVEG. Cystine bridges form between Cys-30-Cys-66, Cys-31-Cys-58, Cys-39-Cys-56, and Cys-43-Cys-52. A propeptide spans 73 to 136 (acidic domain); sequence LALESNSDEP…GDAGLTSLDA (64 aa).

The protein belongs to the plant thionin (TC 1.C.44) family. 4 C-C subfamily.

Its subcellular location is the secreted. Functionally, thionins are small plant proteins which are toxic to animal cells. They seem to exert their toxic effect at the level of the cell membrane. Their precise function is not known. The protein is Alpha-2-purothionin (THI1.2) of Triticum aestivum (Wheat).